The sequence spans 245 residues: Dehydrogenase/reductase SDR family member 6 (245 aa).

NAD(+) is bound by residues 16 to 18 (QGI), D37, and D58. R144 contributes to the substrate binding site. The active-site Proton acceptor is the Y147. Residues K151 and 180–184 (VDTPS) contribute to the NAD(+) site. Substrate-binding residues include R188 and R205.

This sequence belongs to the short-chain dehydrogenases/reductases (SDR) family. In terms of assembly, homotetramer.

The protein resides in the cytoplasm. The enzyme catalyses cis-4-hydroxy-L-proline + NAD(+) = 4-oxo-L-proline + NADH + H(+). The catalysed reaction is (R)-3-hydroxybutanoate + NAD(+) = acetoacetate + NADH + H(+). The protein operates within amino-acid metabolism. It participates in siderophore biosynthesis. In terms of biological role, NAD(H)-dependent dehydrogenase/reductase with a preference for cyclic substrates. Catalyzes stereoselective conversion of 4-oxo-L-proline to cis-4-hydroxy-L-proline, likely a detoxification mechanism for ketoprolines. Mediates the formation of 2,5-dihydroxybenzoate (2,5-DHBA), a siderophore that chelates free cytoplasmic iron, thereby regulating iron transport and homeostasis while protecting cells against free radical-induced oxidative stress. The iron-siderophore complex is imported into mitochondria, providing an iron source for mitochondrial metabolic processes in particular heme synthesis. May act as a 3-hydroxybutyrate dehydrogenase. The protein is Dehydrogenase/reductase SDR family member 6 (bdh2) of Aquarana catesbeiana (American bullfrog).